Reading from the N-terminus, the 2555-residue chain is Squalestatin hexaketide synthase clz14 (2555 aa).

The segment at 1–84 (MDVSKEAGHH…PNATSTTTTT (84 aa)) is disordered. Residues 10–84 (HANGFANGNT…PNATSTTTTT (75 aa)) are compositionally biased toward low complexity. Residues 91–511 (QVPVAICGIG…GSNTHIIIDS (421 aa)) enclose the Ketosynthase family 3 (KS3) domain. Catalysis depends on for beta-ketoacyl synthase activity residues Cys-261, His-398, and His-435. Residues 611-928 (FIFTGQGAQW…LEGIGKLFCF (318 aa)) are malonyl-CoA:ACP transacylase (MAT) domain. The tract at residues 975 to 1104 (HELLGERSLE…GLVTASVVTS (130 aa)) is N-terminal hotdog fold. A dehydratase (DH) domain region spans residues 975-1256 (HELLGERSLE…RGFKCKKTDD (282 aa)). Residues 975–1260 (HELLGERSLE…CKKTDDAFIQ (286 aa)) form the PKS/mFAS DH domain. The Proton acceptor; for dehydratase activity role is filled by His-1007. Positions 1117–1260 (SRKVDTSRWY…CKKTDDAFIQ (144 aa)) are C-terminal hotdog fold. Asp-1177 serves as the catalytic Proton donor; for dehydratase activity. The segment at 1424 to 1595 (SFFQAAGLNK…GFEGAGTVVL (172 aa)) is methyltransferase (CMet) domain. The tract at residues 1821-2141 (GMLNTLHWVG…RGVHMGRIVV (321 aa)) is enoyl reductase (ER) (ER) domain. The interval 2165–2338 (STYLLTGGMG…PASVIDIAAI (174 aa)) is ketoreductase (KR) domain. One can recognise a Carrier domain in the interval 2468-2546 (IIFAQEIAKR…SLGRLATKRL (79 aa)). O-(pantetheine 4'-phosphoryl)serine is present on Ser-2505.

Its pathway is secondary metabolite biosynthesis. Its function is as follows. Highly reducing polyketide synthase (HR-PKS); part of the gene cluster that mediates the biosynthesis of squalestatin S1 (SQS1, also known as zaragozic acid A), a heavily oxidized fungal polyketide that offers potent cholesterol lowering activity by targeting squalene synthase (SS). SQS1 is composed of a 2,8-dioxobicyclic[3.2.1]octane-3,4,5-tricarboxyclic acid core that is connected to two lipophilic polyketide arms. These initial steps feature the priming of an unusual benzoic acid starter unit onto the highly reducing polyketide synthase clz14, followed by oxaloacetate extension and product release to generate a tricarboxylic acid containing product. The phenylalanine ammonia lyase (PAL) clz10 and the acyl-CoA ligase clz12 are involved in transforming phenylalanine into benzoyl-CoA. The citrate synthase-like protein clz17 is involved in connecting the C-alpha-carbons of the hexaketide chain and oxaloacetate to afford the tricarboxylic acid unit. The potential hydrolytic enzymes, clz11 and clz13, are in close proximity to pks2 and may participate in product release. On the other side, the tetraketide arm is synthesized by a the squalestatin tetraketide synthase clz2 and enzymatically esterified to the core in the last biosynthetic step, by the acetyltransferase clz6. The biosynthesis of the tetraketide must involve 3 rounds of chain extension. After the first and second rounds methyl-transfer occurs, and in all rounds of extension the ketoreductase and dehydratase are active. The enoyl reductase and C-MeT of clz2 are not active in the final round of extension. The acetyltransferase clz6 appears to have a broad substrate selectivity for its acyl CoA substrate, allowing the in vitro synthesis of novel squalestatins. The biosynthesis of SQS1 requires several oxidative steps likely performed by oxidoreductases clz3, clz15 and clz16. Finally, in support of the identification of the cluster as being responsible for SQS1 production, the cluster contains a gene encoding a putative squalene synthase (SS) clz20, suggesting a likely mechanism for self-resistance. The protein is Squalestatin hexaketide synthase clz14 of Cochliobolus lunatus (Filamentous fungus).